The sequence spans 344 residues: Anthranilate phosphoribosyltransferase (344 aa).

5-phospho-alpha-D-ribose 1-diphosphate contacts are provided by residues glycine 81, 84–85, serine 89, 91–94, 109–117, and alanine 121; these read GD, NIST, and KHGNRALSS. Glycine 81 provides a ligand contact to anthranilate. Serine 93 provides a ligand contact to Mg(2+). Anthranilate is bound at residue asparagine 112. Arginine 167 serves as a coordination point for anthranilate. 2 residues coordinate Mg(2+): aspartate 226 and glutamate 227.

The protein belongs to the anthranilate phosphoribosyltransferase family. In terms of assembly, homodimer. Mg(2+) serves as cofactor.

It catalyses the reaction N-(5-phospho-beta-D-ribosyl)anthranilate + diphosphate = 5-phospho-alpha-D-ribose 1-diphosphate + anthranilate. It functions in the pathway amino-acid biosynthesis; L-tryptophan biosynthesis; L-tryptophan from chorismate: step 2/5. In terms of biological role, catalyzes the transfer of the phosphoribosyl group of 5-phosphorylribose-1-pyrophosphate (PRPP) to anthranilate to yield N-(5'-phosphoribosyl)-anthranilate (PRA). This chain is Anthranilate phosphoribosyltransferase, found in Xanthobacter autotrophicus (strain ATCC BAA-1158 / Py2).